A 396-amino-acid polypeptide reads, in one-letter code: Phosphoglycerate kinase (396 aa).

Substrate is bound by residues 21–23, Arg37, 60–63, Arg121, and Arg154; these read DFN and HLGR. ATP contacts are provided by residues Lys205, Gly296, Glu327, and 353–356; that span reads GGDS.

It belongs to the phosphoglycerate kinase family. As to quaternary structure, monomer.

The protein localises to the cytoplasm. The catalysed reaction is (2R)-3-phosphoglycerate + ATP = (2R)-3-phospho-glyceroyl phosphate + ADP. It functions in the pathway carbohydrate degradation; glycolysis; pyruvate from D-glyceraldehyde 3-phosphate: step 2/5. The protein is Phosphoglycerate kinase of Anaeromyxobacter sp. (strain K).